We begin with the raw amino-acid sequence, 149 residues long: Internal scaffolding protein ORF3 (149 aa).

The protein belongs to the microvidae B protein family.

It is found in the host cytoplasm. In terms of biological role, participates in the assembly of the viral procapsid in the cytoplasm. Released from the procapsid upon genome packaging, possibly through affinity displacement by the protein ORF8, or by proteolysis. This Spiroplasma virus 4 (SpV4) protein is Internal scaffolding protein ORF3.